Consider the following 152-residue polypeptide: Aspartate carbamoyltransferase regulatory chain (152 aa).

Zn(2+)-binding residues include C107, C112, C136, and C139.

Belongs to the PyrI family. As to quaternary structure, contains catalytic and regulatory chains. Zn(2+) is required as a cofactor.

Its function is as follows. Involved in allosteric regulation of aspartate carbamoyltransferase. This is Aspartate carbamoyltransferase regulatory chain from Chromobacterium violaceum (strain ATCC 12472 / DSM 30191 / JCM 1249 / CCUG 213 / NBRC 12614 / NCIMB 9131 / NCTC 9757 / MK).